A 123-amino-acid chain; its full sequence is Alpha-lactalbumin (123 aa).

In terms of domain architecture, C-type lysozyme spans 1–123; the sequence is KQFTKCELSQ…KLEQWLCEKE (123 aa). Intrachain disulfides connect Cys6–Cys120, Cys28–Cys111, Cys61–Cys77, and Cys73–Cys91. N-linked (GlcNAc...) asparagine glycosylation occurs at Asn45. Residues Lys79, Asp82, Asp84, Asp87, and Asp88 each coordinate Ca(2+).

Belongs to the glycosyl hydrolase 22 family. As to quaternary structure, lactose synthase (LS) is a heterodimer of a catalytic component, beta1,4-galactosyltransferase (beta4Gal-T1) and a regulatory component, alpha-lactalbumin (LA). In terms of tissue distribution, mammary gland specific. Secreted in milk.

Its subcellular location is the secreted. Functionally, regulatory subunit of lactose synthase, changes the substrate specificity of galactosyltransferase in the mammary gland making glucose a good acceptor substrate for this enzyme. This enables LS to synthesize lactose, the major carbohydrate component of milk. In other tissues, galactosyltransferase transfers galactose onto the N-acetylglucosamine of the oligosaccharide chains in glycoproteins. The sequence is that of Alpha-lactalbumin (LALBA) from Papio cynocephalus (Yellow baboon).